The primary structure comprises 170 residues: RNA pyrophosphohydrolase (170 aa).

The Nudix hydrolase domain maps to Pro-8–Pro-151. The short motif at Gly-42–Gly-63 is the Nudix box element.

The protein belongs to the Nudix hydrolase family. RppH subfamily. A divalent metal cation is required as a cofactor.

Functionally, accelerates the degradation of transcripts by removing pyrophosphate from the 5'-end of triphosphorylated RNA, leading to a more labile monophosphorylated state that can stimulate subsequent ribonuclease cleavage. The sequence is that of RNA pyrophosphohydrolase from Gluconobacter oxydans (strain 621H) (Gluconobacter suboxydans).